Here is a 587-residue protein sequence, read N- to C-terminus: MSKEEFMKIQTCVLKVNIHCDGCKQKVKKILQKIEGVFTTKIDAELGKVTVSGNVDPSVLIKKLLKSGKHAEIWGAPKGGSNNNQNQPNLANQFKAMQIDHGGKGGGGGGGGPANNNKGQKIGGGGGGGGGGGGGGGGGPPKMVIPQLTPQQMQQLNPQQLQQLQQLQQMKGFQDLKLPPQLKGGPGPGPGSVPMNKNPQMPNNPNQKAVKFNVPDDDDEEDFSDEFDDEFDEDDDEFDDDLEDDEFDDHPPPPNKMKPMMGGGNMIMPNNMMPNMMMPNAQQMLNAHKNGGGPGPAGGKIEGKGMPFPVQMGGGGGGPGGKKGGPGGGGGNMGNQNQGGGGKNGGKGGGGHPLDGKMGGGGGGPNGNKGGGGVQMNGGPNGGKKGGGGGGGGGGGPMSGGLPPGFRPMGGGGGGGGGPQSMSMPMGGAMGGPMGSLPQMGGGPGPMSNNMQAVQGLPAMGPGGGGGGGPSAEAPPGYFQGQVSGNGGGGQDSMPGNPYLQQQQQQQQQQYLAAVMNQQRSMGNERFQPMMYARPPPAVNYMPPQPQPHQQHPYPYPYPYPPQYPPHNGDQYSDYFNDENTSSCNIM.

In terms of domain architecture, HMA spans 9 to 72 (IQTCVLKVNI…KLLKSGKHAE (64 aa)). A metal cation contacts are provided by C20 and C23. Disordered stretches follow at residues 98–146 (QIDH…MVIP), 176–261 (LKLP…KPMM), 287–449 (AHKN…PMSN), 462–504 (PGGG…QQQQ), and 532–587 (YARP…CNIM). Composition is skewed to gly residues over residues 104 to 113 (KGGGGGGGGP) and 121 to 140 (KIGGGGGGGGGGGGGGGGGP). Residues 194–208 (PMNKNPQMPNNPNQK) are compositionally biased toward low complexity. Positions 215-248 (PDDDDEEDFSDEFDDEFDEDDDEFDDDLEDDEFD) are enriched in acidic residues. 3 stretches are compositionally biased toward gly residues: residues 290 to 300 (NGGGPGPAGGK), 312 to 419 (MGGG…GGGP), and 428 to 445 (GAMGGPMGSLPQMGGGPG). Residues 471-483 (SAEAPPGYFQGQV) are compositionally biased toward low complexity. Pro residues-rich tracts occupy residues 534–547 (RPPPAVNYMPPQPQ) and 554–565 (YPYPYPYPPQYP). Over residues 578-587 (DENTSSCNIM) the composition is skewed to polar residues. C584 is subject to Cysteine methyl ester. A lipid anchor (S-farnesyl cysteine) is attached at C584. A propeptide spans 585 to 587 (NIM) (removed in mature form).

The protein belongs to the HIPP family.

Heavy-metal-binding protein. This is Heavy metal-associated isoprenylated plant protein 33 from Arabidopsis thaliana (Mouse-ear cress).